The chain runs to 393 residues: Formate-dependent phosphoribosylglycinamide formyltransferase (393 aa).

Residues 22-23 (EL) and glutamate 82 contribute to the N(1)-(5-phospho-beta-D-ribosyl)glycinamide site. ATP is bound by residues arginine 114, lysine 155, 160–165 (SSGKGQ), 195–198 (EGFI), and glutamate 203. Residues 119 to 308 (RLAAEELGLP…EFALHARAIL (190 aa)) form the ATP-grasp domain. Mg(2+)-binding residues include glutamate 267 and glutamate 279. Residues aspartate 286, lysine 356, and 363 to 364 (RR) contribute to the N(1)-(5-phospho-beta-D-ribosyl)glycinamide site.

This sequence belongs to the PurK/PurT family. As to quaternary structure, homodimer.

The catalysed reaction is N(1)-(5-phospho-beta-D-ribosyl)glycinamide + formate + ATP = N(2)-formyl-N(1)-(5-phospho-beta-D-ribosyl)glycinamide + ADP + phosphate + H(+). It participates in purine metabolism; IMP biosynthesis via de novo pathway; N(2)-formyl-N(1)-(5-phospho-D-ribosyl)glycinamide from N(1)-(5-phospho-D-ribosyl)glycinamide (formate route): step 1/1. Its function is as follows. Involved in the de novo purine biosynthesis. Catalyzes the transfer of formate to 5-phospho-ribosyl-glycinamide (GAR), producing 5-phospho-ribosyl-N-formylglycinamide (FGAR). Formate is provided by PurU via hydrolysis of 10-formyl-tetrahydrofolate. The chain is Formate-dependent phosphoribosylglycinamide formyltransferase from Azoarcus sp. (strain BH72).